The sequence spans 1070 residues: Duffy receptor gamma form (1070 aa).

The first 21 residues, 1–21 (MEGKKKRPLFFLLVLLLSHKA), serve as a signal peptide directing secretion. The Extracellular segment spans residues 22–1003 (NNVLFERMNG…SYECFTKGSS (982 aa)). Residues Asn-134 and Asn-179 are each glycosylated (N-linked (GlcNAc...) asparagine). Intrachain disulfides connect Cys-214/Cys-243 and Cys-227/Cys-234. Residues 279 to 281 (RGD) carry the Cell attachment site motif. Cystine bridges form between Cys-296/Cys-372, Cys-410/Cys-427, Cys-422/Cys-502, and Cys-431/Cys-500. The tract at residues 518–912 (VGSGVESKAP…LNNRKLNRDQ (395 aa)) is disordered. A compositionally biased stretch (polar residues) spans 526–541 (APSSNPINEAVKSSSG). 3 stretches are compositionally biased toward basic and acidic residues: residues 544 to 559 (KVQEDSAHRSVNEGEG), 672 to 707 (GEVHNGTDTEPKEDGEKADPQKNIEVKGKQDTDDRS), and 714 to 731 (HTDERASLGETHMEKDTE). Asn-676 carries N-linked (GlcNAc...) asparagine glycosylation. Positions 732–763 (TTGGSTLTPEQNVSVASDNGNVPGSGNKQNEG) are enriched in polar residues. Asn-743 carries an N-linked (GlcNAc...) asparagine glycan. Residues 766–776 (ALSGAESLESS) show a composition bias toward low complexity. N-linked (GlcNAc...) asparagine glycosylation is present at Asn-785. The span at 796–807 (GNEKDFQKHDFM) shows a compositional bias: basic and acidic residues. Low complexity predominate over residues 814-863 (DQTSSDHTSSDQTSSDQTSSDQTSSDQTSSDQTSSDQTSSDQTSSDQTID). The span at 864–888 (TEGHHRDNVRNPEIKSSEDMSKGDF) shows a compositional bias: basic and acidic residues. Residues 890 to 906 (RNSNSNELYSHNNLNNR) are compositionally biased toward polar residues. Residue Asn-936 is glycosylated (N-linked (GlcNAc...) asparagine). Residues 1004-1025 (TGIVYFATGGAFLIILLLFASW) form a helical membrane-spanning segment. Residues 1026–1070 (NAASNDYEEEATFDEFEEYCYNIHRTPQMPNDIEHMQQFTPLDYS) are Cytoplasmic-facing.

Its subcellular location is the membrane. Binds to Neu5Gc-sialylated receptors on macaque erythrocytes. In Plasmodium knowlesi, this protein is Duffy receptor gamma form.